A 91-amino-acid polypeptide reads, in one-letter code: Ixochymostatin (91 aa).

The signal sequence occupies residues 1-20; that stretch reads MKTYVLQALLLTLAVAVVRA. 5 disulfides stabilise this stretch: cysteine 34–cysteine 70, cysteine 43–cysteine 66, cysteine 48–cysteine 62, cysteine 53–cysteine 90, and cysteine 72–cysteine 84. A TIL domain is found at 34–90; it reads CAEGETWKECVGSSCAELTCEHPEPSLGCTYDCNYGCYCAPDFFRNANKECVKKDKC.

It belongs to the serine protease inhibitor-like (TIL domain-containing) family. As to expression, salivary gland. Midgut.

It is found in the secreted. Its function is as follows. Tight-binding competitive inhibitor of chymotrypsin-like proteases; inhibits host chymase, cathepsin G (CTSG) and chymotrypsin. Inhibits chymase-mediated generation of vasoconstrictor peptides: angiotensin II and endothelin I. Reduces chymase-mediated vascular permeability and vascular endothelial-cadherin degradation. The polypeptide is Ixochymostatin (Ixodes scapularis (Black-legged tick)).